We begin with the raw amino-acid sequence, 242 residues long: MKRSKTLRAADAKVDREKLYAPLEAVRLAKETSTTKFDATVEVAFRLGVDPRKADQMVRGTVNLPHGTGKTARVLVFATGDRAAAAEAAGADIVGDDELINEIAKGNRLNEFDAVVATPDLMGKVGRLGRVLGPRGLMPNPKTGTVTMDVAKAVTDIKGGKIEFRVDKHSNLHFIIGKVSFSDEQLVENYAAALDEIVRLKPSAAKGRYIKKAALSTTMGPGIQLDSNRTRNLLVEEDPAAV.

Belongs to the universal ribosomal protein uL1 family. As to quaternary structure, part of the 50S ribosomal subunit.

Functionally, binds directly to 23S rRNA. The L1 stalk is quite mobile in the ribosome, and is involved in E site tRNA release. Its function is as follows. Protein L1 is also a translational repressor protein, it controls the translation of the L11 operon by binding to its mRNA. This chain is Large ribosomal subunit protein uL1, found in Streptomyces sp. (strain FRI-5).